The chain runs to 1142 residues: Error-prone DNA polymerase (1142 aa).

A disordered region spans residues 291-361; the sequence is TSSPAQAARE…GTGAAAGTDR (71 aa). 2 stretches are compositionally biased toward low complexity: residues 311-320 and 327-344; these read LRASLPAERP and GPAA…PGEP. Positions 345–355 are enriched in gly residues; the sequence is GLAGAGGGTGA.

Belongs to the DNA polymerase type-C family. DnaE2 subfamily.

Its subcellular location is the cytoplasm. It carries out the reaction DNA(n) + a 2'-deoxyribonucleoside 5'-triphosphate = DNA(n+1) + diphosphate. In terms of biological role, DNA polymerase involved in damage-induced mutagenesis and translesion synthesis (TLS). It is not the major replicative DNA polymerase. The chain is Error-prone DNA polymerase from Anaeromyxobacter dehalogenans (strain 2CP-1 / ATCC BAA-258).